We begin with the raw amino-acid sequence, 610 residues long: Elongation factor 4 (610 aa).

The 183-residue stretch at 11-193 (EKIRNFSIIA…QIVEKVPAPT (183 aa)) folds into the tr-type G domain. Residues 23 to 28 (DHGKST) and 140 to 143 (NKID) each bind GTP.

The protein belongs to the TRAFAC class translation factor GTPase superfamily. Classic translation factor GTPase family. LepA subfamily.

It localises to the cell membrane. The catalysed reaction is GTP + H2O = GDP + phosphate + H(+). Functionally, required for accurate and efficient protein synthesis under certain stress conditions. May act as a fidelity factor of the translation reaction, by catalyzing a one-codon backward translocation of tRNAs on improperly translocated ribosomes. Back-translocation proceeds from a post-translocation (POST) complex to a pre-translocation (PRE) complex, thus giving elongation factor G a second chance to translocate the tRNAs correctly. Binds to ribosomes in a GTP-dependent manner. This chain is Elongation factor 4, found in Streptococcus pyogenes serotype M12 (strain MGAS9429).